The sequence spans 251 residues: 1-(5-phosphoribosyl)-5-[(5-phosphoribosylamino)methylideneamino] imidazole-4-carboxamide isomerase (251 aa).

The Proton acceptor role is filled by aspartate 8. The active-site Proton donor is the aspartate 129.

Belongs to the HisA/HisF family.

It localises to the cytoplasm. The enzyme catalyses 1-(5-phospho-beta-D-ribosyl)-5-[(5-phospho-beta-D-ribosylamino)methylideneamino]imidazole-4-carboxamide = 5-[(5-phospho-1-deoxy-D-ribulos-1-ylimino)methylamino]-1-(5-phospho-beta-D-ribosyl)imidazole-4-carboxamide. Its pathway is amino-acid biosynthesis; L-histidine biosynthesis; L-histidine from 5-phospho-alpha-D-ribose 1-diphosphate: step 4/9. This chain is 1-(5-phosphoribosyl)-5-[(5-phosphoribosylamino)methylideneamino] imidazole-4-carboxamide isomerase, found in Desulfosudis oleivorans (strain DSM 6200 / JCM 39069 / Hxd3) (Desulfococcus oleovorans).